Here is a 284-residue protein sequence, read N- to C-terminus: tRNA uridine(34) hydroxylase (284 aa).

One can recognise a Rhodanese domain in the interval 132-226 (DGRPVVMLDT…YFEEVGGAHY (95 aa)). Cysteine 186 acts as the Cysteine persulfide intermediate in catalysis.

Belongs to the TrhO family.

It catalyses the reaction uridine(34) in tRNA + AH2 + O2 = 5-hydroxyuridine(34) in tRNA + A + H2O. Catalyzes oxygen-dependent 5-hydroxyuridine (ho5U) modification at position 34 in tRNAs. This chain is tRNA uridine(34) hydroxylase, found in Burkholderia vietnamiensis (strain G4 / LMG 22486) (Burkholderia cepacia (strain R1808)).